A 345-amino-acid polypeptide reads, in one-letter code: 3-isopropylmalate dehydrogenase (345 aa).

Residue 76–87 (GPKYDNAPVRPE) participates in NAD(+) binding. Substrate-binding residues include Arg-94, Arg-104, Arg-132, and Asp-216. Residues Asp-216, Asp-240, and Asp-244 each coordinate Mg(2+). 274–286 (GSAPDIAGQGIAN) serves as a coordination point for NAD(+).

It belongs to the isocitrate and isopropylmalate dehydrogenases family. LeuB type 1 subfamily. As to quaternary structure, homodimer. The cofactor is Mg(2+). Mn(2+) is required as a cofactor.

The protein resides in the cytoplasm. The catalysed reaction is (2R,3S)-3-isopropylmalate + NAD(+) = 4-methyl-2-oxopentanoate + CO2 + NADH. It functions in the pathway amino-acid biosynthesis; L-leucine biosynthesis; L-leucine from 3-methyl-2-oxobutanoate: step 3/4. Its function is as follows. Catalyzes the oxidation of 3-carboxy-2-hydroxy-4-methylpentanoate (3-isopropylmalate) to 3-carboxy-4-methyl-2-oxopentanoate. The product decarboxylates to 4-methyl-2 oxopentanoate. The protein is 3-isopropylmalate dehydrogenase of Streptococcus thermophilus (strain CNRZ 1066).